The chain runs to 552 residues: Olefin beta-lactone synthetase (552 aa).

ATP is bound by residues 182 to 190, 316 to 321, D425, and R440; these read TSGSTGVPK and TPYGAT.

It belongs to the ATP-dependent AMP-binding enzyme family. As to quaternary structure, monomer.

It catalyses the reaction a (2R,3S)-2-alkyl-3-hydroxyalkanoate + ATP = a cis-3-alkyl-4-alkyloxetan-2-one + AMP + diphosphate. Functionally, involved in olefin biosynthesis. Catalyzes the conversion of beta-hydroxy acid substrates to beta-lactones in the presence of ATP. Can use all four stereoisomers of 2-hexyl-3-hydroxydecanoic acid. This Stenotrophomonas maltophilia (strain K279a) protein is Olefin beta-lactone synthetase.